We begin with the raw amino-acid sequence, 1938 residues long: Myosin-13 (1938 aa).

A Myosin N-terminal SH3-like domain is found at 33–82 (DSKKACFVADNKEMYVKGMIQTRENDKVIVKTLDDRMLTLNNDQVFPMNP). The Myosin motor domain occupies 86–782 (DKIEDMAMMT…LLGLLEEMRD (697 aa)). The residue at position 130 (K130) is an N6,N6,N6-trimethyllysine. ATP is bound at residue 179–186 (GESGAGKT). 2 actin-binding regions span residues 659 to 681 (LNKL…IPNE) and 761 to 775 (RFGN…GLLG). An IQ domain is found at 785–814 (LVTLMTSTQAVCRGYLMRVEFKKMMERRDS). Residues 843-1938 (LLKSAEAEKE…RDVGSQKMEE (1096 aa)) are a coiled coil. The interval 1917 to 1938 (AESQVNKLRAKSRDVGSQKMEE) is disordered. Over residues 1927–1938 (KSRDVGSQKMEE) the composition is skewed to basic and acidic residues.

It belongs to the TRAFAC class myosin-kinesin ATPase superfamily. Myosin family. Muscle myosin is a hexameric protein that consists of 2 heavy chain subunits (MHC), 2 alkali light chain subunits (MLC) and 2 regulatory light chain subunits (MLC-2). As to expression, specifically expressed in extraocular and laryngeal muscles.

The protein resides in the cytoplasm. The protein localises to the myofibril. Fast twitching myosin mediating the high-velocity and low-tension contractions of specific striated muscles. This is Myosin-13 (MYH13) from Homo sapiens (Human).